The chain runs to 406 residues: Mitochondrial potassium channel (406 aa).

The transit peptide at 1–35 (MTGCSPVFAMQHVVGVPRILVRRTFLGTDVTMTRT) directs the protein to the mitochondrion. Residues 36–198 (LCSPGPREKR…KERTRAERTK (163 aa)) lie on the Mitochondrial matrix side of the membrane. The stretch at 113–140 (VREAREGLEAQQTKLKEVRDRLDRVSRE) forms a coiled coil. The helical transmembrane segment at 199–219 (NWSLIGSVLGALIGVAGSTYV) threads the bilayer. Over 220-382 (NRVRLQELKA…LEAQANRNTV (163 aa)) the chain is Mitochondrial intermembrane. The chain crosses the membrane as a helical span at residues 383–403 (SSTLVTCVTFLATLPLLYMLF). Topologically, residues 404-406 (KTS) are mitochondrial matrix.

The mitochondrial potassium channel (mitoK(ATP)) is composed of 4 subunits of CCDC51/MITOK and 4 subunits of ABCB8/MITOSUR.

It localises to the mitochondrion inner membrane. It catalyses the reaction K(+)(in) = K(+)(out). With respect to regulation, inhibited by ATP via mitoK(ATP) channel. Functionally, pore-forming subunit of the mitochondrial ATP-gated potassium channel (mitoK(ATP)). Together with ATP-binding subunit ABCB8/MITOSUR of the mitoK(ATP) channel, mediates ATP-dependent K(+) currents across the mitochondrial inner membrane. An increase in ATP intracellular levels closes the channel, inhibiting K(+) transport, whereas a decrease in ATP levels enhances K(+) uptake in the mitochondrial matrix. May contribute to the homeostatic control of cellular metabolism under stress conditions by regulating the mitochondrial matrix volume. This chain is Mitochondrial potassium channel, found in Mus musculus (Mouse).